The chain runs to 726 residues: Dipeptidyl-peptidase 5 (726 aa).

Positions 1–19 (MAAAKWLIASLAFASSGLA) are cleaved as a signal peptide. Residues asparagine 96 and asparagine 252 are each glycosylated (N-linked (GlcNAc...) asparagine). Residues 269–291 (AEPINKRNGPRTPQAIEGASSSP) are disordered. Residue serine 558 is the Charge relay system of the active site. Asparagine 605 carries N-linked (GlcNAc...) asparagine glycosylation. Residues aspartate 641 and histidine 673 each act as charge relay system in the active site. Asparagine 699 is a glycosylation site (N-linked (GlcNAc...) asparagine).

It belongs to the peptidase S9C family.

It is found in the secreted. Its function is as follows. Extracellular dipeptidyl-peptidase which removes N-terminal dipeptides sequentially from polypeptides having unsubstituted N-termini. Contributes to pathogenicity. The protein is Dipeptidyl-peptidase 5 (DPP5) of Trichophyton equinum (Horse ringworm fungus).